The following is a 290-amino-acid chain: ATP synthase gamma chain (290 aa).

It belongs to the ATPase gamma chain family. F-type ATPases have 2 components, CF(1) - the catalytic core - and CF(0) - the membrane proton channel. CF(1) has five subunits: alpha(3), beta(3), gamma(1), delta(1), epsilon(1). CF(0) has three main subunits: a, b and c.

The protein localises to the cell inner membrane. In terms of biological role, produces ATP from ADP in the presence of a proton gradient across the membrane. The gamma chain is believed to be important in regulating ATPase activity and the flow of protons through the CF(0) complex. The chain is ATP synthase gamma chain from Paracoccus denitrificans (strain Pd 1222).